A 1015-amino-acid chain; its full sequence is DExH-box ATP-dependent RNA helicase DExH8 (1015 aa).

The Helicase ATP-binding domain maps to 36 to 197 (IDKILENRVT…FKELGRGERV (162 aa)). 49–56 (GEPGCGKS) provides a ligand contact to ATP. The short motif at 144–147 (DEVH) is the DEVH box element. The Helicase C-terminal domain occupies 254 to 419 (LIHDLILYIH…KLSLRQQVLH (166 aa)). C3H1-type zinc fingers lie at residues 727-753 (YGEA…THTL) and 754-782 (QSTR…HAMR).

It belongs to the DExH box helicase family.

It catalyses the reaction ATP + H2O = ADP + phosphate + H(+). This chain is DExH-box ATP-dependent RNA helicase DExH8, found in Arabidopsis thaliana (Mouse-ear cress).